The primary structure comprises 1122 residues: Transcription-repair-coupling factor (1122 aa).

One can recognise a Helicase ATP-binding domain in the interval 593–758 (DLRNGMLMDR…MTGLKELSII (166 aa)). 606 to 613 (GDVGFGKT) contributes to the ATP binding site. The DEEQ box motif lies at 711-714 (DEEQ). Residues 779–933 (IIRDALLREH…GFTIASRDMD (155 aa)) enclose the Helicase C-terminal domain.

It in the N-terminal section; belongs to the UvrB family. This sequence in the C-terminal section; belongs to the helicase family. RecG subfamily.

It is found in the cytoplasm. Its function is as follows. Couples transcription and DNA repair by recognizing RNA polymerase (RNAP) stalled at DNA lesions. Mediates ATP-dependent release of RNAP and its truncated transcript from the DNA, and recruitment of nucleotide excision repair machinery to the damaged site. This chain is Transcription-repair-coupling factor, found in Rickettsia conorii (strain ATCC VR-613 / Malish 7).